We begin with the raw amino-acid sequence, 184 residues long: ATP-dependent protease subunit HslV (184 aa).

The active site involves T12. A166, C169, and T172 together coordinate Na(+).

Belongs to the peptidase T1B family. HslV subfamily. In terms of assembly, a double ring-shaped homohexamer of HslV is capped on each side by a ring-shaped HslU homohexamer. The assembly of the HslU/HslV complex is dependent on binding of ATP.

It is found in the cytoplasm. The catalysed reaction is ATP-dependent cleavage of peptide bonds with broad specificity.. With respect to regulation, allosterically activated by HslU binding. In terms of biological role, protease subunit of a proteasome-like degradation complex believed to be a general protein degrading machinery. The polypeptide is ATP-dependent protease subunit HslV (Brucella ovis (strain ATCC 25840 / 63/290 / NCTC 10512)).